A 353-amino-acid polypeptide reads, in one-letter code: Neutral protease 2 homolog AO090001000135 (353 aa).

An N-terminal signal peptide occupies residues 1-19 (MRFISVSSLLLALAPALNA). Positions 20–176 (VPVEVAGSAQ…TQAVKILERR (157 aa)) are excised as a propeptide. 2 disulfide bridges follow: Cys182–Cys254 and Cys261–Cys279. A Zn(2+)-binding site is contributed by His304. Residue Glu305 is part of the active site. 2 residues coordinate Zn(2+): His308 and Asp319.

It belongs to the peptidase M35 family. Zn(2+) is required as a cofactor.

It localises to the secreted. It carries out the reaction Preferential cleavage of bonds with hydrophobic residues in P1'. Also 3-Asn-|-Gln-4 and 8-Gly-|-Ser-9 bonds in insulin B chain.. In terms of biological role, secreted metalloproteinase that allows assimilation of proteinaceous substrates. Shows high activities on basic nuclear substrates such as histone and protamine. The polypeptide is Neutral protease 2 homolog AO090001000135 (Aspergillus oryzae (strain ATCC 42149 / RIB 40) (Yellow koji mold)).